Reading from the N-terminus, the 1361-residue chain is Rho guanine nucleotide exchange factor 18 (1361 aa).

Disordered regions lie at residues 33–88 (LQDL…SCSE), 131–156 (SGGG…SRSV), and 244–292 (DGAG…ARER). A compositionally biased stretch (basic and acidic residues) spans 50-61 (PDSRPTGEEPGR). Over residues 64–73 (LFSSLAGSQD) the composition is skewed to polar residues. Residues 74–88 (LSRRRSWERSRSCSE) are compositionally biased toward basic and acidic residues. Composition is skewed to basic and acidic residues over residues 245–256 (GAGKNEKSDKST) and 271–292 (RQKE…ARER). The C2H2-type; degenerate zinc finger occupies 310-334 (SSCPLCGKPFLSSASLKEHPRGTLL). The interval 348–368 (TVSQKGGPQPTPSPAGPGTQL) is disordered. Residues 447-644 (KRQDVLYELM…KDIISQVDAK (198 aa)) enclose the DH domain. The PH domain occupies 684-786 (QLHLEGMLCW…WMAHIQRAVE (103 aa)). Disordered regions lie at residues 893-980 (ANGQ…DPRL), 1143-1211 (LKKQ…RLAK), 1229-1264 (AAVQ…SSAS), and 1277-1361 (MGKD…VIFF). A Phosphothreonine modification is found at T912. S921 carries the phosphoserine modification. A coiled-coil region spans residues 1038-1148 (LEQERQRNFE…LLRRLKKQNT (111 aa)). Over residues 1191–1211 (YAERPEVARRDSAPTENRLAK) the composition is skewed to basic and acidic residues. Residues 1254–1264 (RGSQRWESSAS) are compositionally biased toward polar residues. A phosphoserine mark is found at S1289 and S1291. 2 stretches are compositionally biased toward pro residues: residues 1300–1317 (PAPP…PPAD) and 1334–1344 (PGPPAPSPLPA). A compositionally biased stretch (basic and acidic residues) spans 1349 to 1361 (AKEDASKEDVIFF).

As to quaternary structure, interacts with SEPT9; the interaction may inhibit GEF activity. Interacts with Gbetagamma subunits GNB1 and GNG2. Interacts with EPB41L4B. Interacts with PATJ (via C-terminus). As to expression, expressed in all tissues tested with highest expression in kidney and pancreas. Weakly or not expressed in liver, skeletal muscle and testis. Isoform 1: Expressed in eosinophils. Isoform 2: Expressed in eosinophils. Isoform 3: Expressed in eosinophils. Isoform 4: Not detected in eosinophils.

The protein localises to the cytoplasm. It is found in the cytoskeleton. The protein resides in the cell membrane. It localises to the apical cell membrane. Its function is as follows. Acts as a guanine nucleotide exchange factor (GEF) for RhoA GTPases. Its activation induces formation of actin stress fibers. Also acts as a GEF for RAC1, inducing production of reactive oxygen species (ROS). Does not act as a GEF for CDC42. The G protein beta-gamma (Gbetagamma) subunits of heterotrimeric G proteins act as activators, explaining the integrated effects of LPA and other G-protein coupled receptor agonists on actin stress fiber formation, cell shape change and ROS production. Required for EPB41L4B-mediated regulation of the circumferential actomyosin belt in epithelial cells. The polypeptide is Rho guanine nucleotide exchange factor 18 (ARHGEF18) (Homo sapiens (Human)).